The primary structure comprises 428 residues: tRNA(Ile)-lysidine synthase (428 aa).

25–30 contacts ATP; that stretch reads SGGIDS.

It belongs to the tRNA(Ile)-lysidine synthase family.

It localises to the cytoplasm. The enzyme catalyses cytidine(34) in tRNA(Ile2) + L-lysine + ATP = lysidine(34) in tRNA(Ile2) + AMP + diphosphate + H(+). Its function is as follows. Ligates lysine onto the cytidine present at position 34 of the AUA codon-specific tRNA(Ile) that contains the anticodon CAU, in an ATP-dependent manner. Cytidine is converted to lysidine, thus changing the amino acid specificity of the tRNA from methionine to isoleucine. This chain is tRNA(Ile)-lysidine synthase, found in Haemophilus ducreyi (strain 35000HP / ATCC 700724).